Consider the following 79-residue polypeptide: Defensin-like protein 109 (79 aa).

Residues 1–24 form the signal peptide; the sequence is MDFTKKILVVFAFTIMLGISSVHC. Intrachain disulfides connect Cys41/Cys76, Cys47/Cys68, Cys54/Cys74, and Cys58/Cys75.

It belongs to the DEFL family.

It localises to the secreted. This Arabidopsis thaliana (Mouse-ear cress) protein is Defensin-like protein 109.